The primary structure comprises 660 residues: DNA mismatch repair protein MutL (660 aa).

Disordered stretches follow at residues 368–426 (PQQT…PTKK) and 439–461 (NREQRESTSQVNEQSHTFRSTQQ). Positions 406-417 (SSSSNSTAPSRS) are enriched in low complexity.

Belongs to the DNA mismatch repair MutL/HexB family.

Its function is as follows. This protein is involved in the repair of mismatches in DNA. It is required for dam-dependent methyl-directed DNA mismatch repair. May act as a 'molecular matchmaker', a protein that promotes the formation of a stable complex between two or more DNA-binding proteins in an ATP-dependent manner without itself being part of a final effector complex. This is DNA mismatch repair protein MutL from Aliivibrio fischeri (strain ATCC 700601 / ES114) (Vibrio fischeri).